A 96-amino-acid chain; its full sequence is Protein Vpr (96 aa).

The interval 1 to 42 is homooligomerization; that stretch reads MEQAPEDQGPQREPYNEWTLELLEELKNEAVRHFPRIWLHSL. Ser79, Ser94, and Ser96 each carry phosphoserine; by host.

This sequence belongs to the HIV-1 VPR protein family. As to quaternary structure, homooligomer, may form homodimer. Interacts with p6-gag region of the Pr55 Gag precursor protein through a (Leu-X-X)4 motif near the C-terminus of the P6gag protein. Interacts with host UNG. May interact with host RAD23A/HHR23A. Interacts with host VPRBP/DCAF1, leading to hijack the CUL4A-RBX1-DDB1-DCAF1/VPRBP complex, mediating ubiquitination of host proteins such as TERT and ZGPAT and arrest of the cell cycle in G2 phase. In terms of processing, phosphorylated on several residues by host. These phosphorylations regulate VPR activity for the nuclear import of the HIV-1 pre-integration complex.

Its subcellular location is the virion. It localises to the host nucleus. The protein resides in the host extracellular space. Its function is as follows. During virus replication, may deplete host UNG protein, and incude G2-M cell cycle arrest. Acts by targeting specific host proteins for degradation by the 26S proteasome, through association with the cellular CUL4A-DDB1 E3 ligase complex by direct interaction with host VPRPB/DCAF-1. Cell cycle arrest reportedly occurs within hours of infection and is not blocked by antiviral agents, suggesting that it is initiated by the VPR carried into the virion. Additionally, VPR induces apoptosis in a cell cycle dependent manner suggesting that these two effects are mechanistically linked. Detected in the serum and cerebrospinal fluid of AIDS patient, VPR may also induce cell death to bystander cells. Functionally, during virus entry, plays a role in the transport of the viral pre-integration (PIC) complex to the host nucleus. This function is crucial for viral infection of non-dividing macrophages. May act directly at the nuclear pore complex, by binding nucleoporins phenylalanine-glycine (FG)-repeat regions. This chain is Protein Vpr, found in Homo sapiens (Human).